Here is a 290-residue protein sequence, read N- to C-terminus: Pirin (290 aa).

Fe cation is bound by residues histidine 56, histidine 58, histidine 101, and glutamate 103.

The protein belongs to the pirin family. As to quaternary structure, may interact with NF1/CTF1. Interacts with BCL3. Identified in a complex comprised of PIR, BLC3, NFKB1 and target DNA. Fe cation is required as a cofactor. In terms of tissue distribution, weakly expressed in bone marrow.

The protein resides in the nucleus. It localises to the cytoplasm. The enzyme catalyses quercetin + O2 = 2-(3,4-dihydroxybenzoyloxy)-4,6-dihydroxybenzoate + CO. It participates in flavonoid metabolism; quercetin degradation. Functionally, transcriptional coregulator of NF-kappa-B which facilitates binding of NF-kappa-B proteins to target kappa-B genes in a redox-state-dependent manner. May be required for efficient terminal myeloid maturation of hematopoietic cells. Has quercetin 2,3-dioxygenase activity (in vitro). The protein is Pirin (Pir) of Mus musculus (Mouse).